The primary structure comprises 277 residues: 2,5-diketo-D-gluconic acid reductase B (277 aa).

The active-site Proton donor is tyrosine 51. Histidine 109 is a substrate binding site. NADP(+) is bound at residue 189-242 (SPLARRSELLTEQLLQELAVVYGVTPTQVVLRWHVQLGSTPIPKSADPDRQREN).

Belongs to the aldo/keto reductase family.

It is found in the cytoplasm. The enzyme catalyses 2-dehydro-D-gluconate + NADP(+) = 2,5-didehydro-D-gluconate + NADPH + H(+). Catalyzes the reduction of 2,5-diketo-D-gluconic acid (25DKG) to 2-keto-L-gulonic acid (2KLG). 25DKGR-B has higher catalytic efficiency than 25DKGR-A. The protein is 2,5-diketo-D-gluconic acid reductase B (dkgB) of Corynebacterium sp. (strain SHS752001).